Reading from the N-terminus, the 583-residue chain is Malonate--CoA ligase ACSF3, mitochondrial (583 aa).

The transit peptide at 1–27 (MPPHLALPFRRLFWSLASSQLIPRRHR) directs the protein to the mitochondrion. ATP contacts are provided by residues 202 to 210 (TSGTTGRPK), Asp455, Arg469, and Lys561.

It belongs to the ATP-dependent AMP-binding enzyme family.

It is found in the mitochondrion. The enzyme catalyses tetracosanoate + ATP + CoA = tetracosanoyl-CoA + AMP + diphosphate. The catalysed reaction is malonate + ATP + CoA = malonyl-CoA + AMP + diphosphate. Catalyzes the initial reaction in intramitochondrial fatty acid synthesis, by activating malonate and methylmalonate, but not acetate, into their respective CoA thioester. May have some preference toward very-long-chain substrates. In Mus musculus (Mouse), this protein is Malonate--CoA ligase ACSF3, mitochondrial.